A 415-amino-acid polypeptide reads, in one-letter code: MHLLCFLSLACSLLAAALIPSPREAPATVAAFESGLGFSEAEPDGGEVKAFEGKDLEEQLRSVSSVDELMSVLYPDYWKMYKCQLRKGGWQQPTLNTRTGDSVKFAAAHYNTEILKSIDNEWRKTQCMPREVCIDVGKEFGAATNTFFKPPCVSVYRCGGCCNSEGLQCMNTSTGYLSKTLFEITVPLSQGPKPVTISFANHTSCRCMSKLDVYRQVHSIIRRSLPATLPQCQAANKTCPTNYVWNNYMCRCLAQQDFIFYSNVEDDSTNGFHDVCGPNKELDEDTCQCVCKGGLRPSSCGPHKELDRDSCQCVCKNKLFPNSCGANREFDENTCQCVCKRTCPRNQPLNPGKCACECTENTQKCFLKGKKFHHQTCSCYRRPCANRLKHCDPGLSFSEEVCRCVPSYWKRPHLN.

The first 31 residues, 1–31 (MHLLCFLSLACSLLAAALIPSPREAPATVAA), serve as a signal peptide directing secretion. Positions 32-107 (FESGLGFSEA…RTGDSVKFAA (76 aa)) are excised as a propeptide. Intrachain disulfides connect Cys-127/Cys-169, Cys-158/Cys-205, and Cys-162/Cys-207. Residues Asn-171, Asn-201, and Asn-236 are each glycosylated (N-linked (GlcNAc...) asparagine). A propeptide spanning residues 224–415 (SLPATLPQCQ…PSYWKRPHLN (192 aa)) is cleaved from the precursor. 4 consecutive repeat copies span residues 276–291 (CGPN…QCVC), 300–315 (CGPH…QCVC), 324–339 (CGAN…QCVC), and 343–358 (CPRN…ACEC). Residues 276-358 (CGPNKELDED…LNPGKCACEC (83 aa)) are 4 X 16 AA repeats of C-X(10)-C-X-C-X(1,3)-C.

Belongs to the PDGF/VEGF growth factor family. Homodimer; non-covalent and antiparallel. Interacts with FLT4/VEGFR3; the interaction is required for FLT4/VEGFR3 homodimarization and activation. Post-translationally, undergoes a complex proteolytic maturation which generates a variety of processed secreted forms with increased activity toward VEGFR-3, but only the fully processed form could activate VEGFR-2. VEGF-C first form an antiparallel homodimer linked by disulfide bonds. Before secretion, a cleavage occurs between Arg-223 and Ser-224 producing a heterotetramer. The next extracellular step of the processing removes the N-terminal propeptide. Finally the mature VEGF-C is composed mostly of two VEGF homology domains (VHDs) bound by non-covalent interactions. Expressed in adult heart, brain, spleen, lung, liver, skeletal muscle, kidney, testis and intestine with higher levels in heart, brain and kidney. Isoform 4 levels are very low. Isoform 3 is mostly expressed in liver and has reduced expression level in other tissues. Isoform 2 is mostly expressed in brain and kidney, although a lower level expression in other tissues is also detectable.

The protein localises to the secreted. Functionally, growth factor active in angiogenesis, and endothelial cell growth, stimulating their proliferation and migration and also has effects on the permeability of blood vessels. May function in angiogenesis of the venous and lymphatic vascular systems during embryogenesis, and also in the maintenance of differentiated lymphatic endothelium in adults. Binds and activates KDR/VEGFR2 and FLT4/VEGFR3 receptors. The chain is Vascular endothelial growth factor C (Vegfc) from Mus musculus (Mouse).